We begin with the raw amino-acid sequence, 63 residues long: Potassium channel toxin alpha-KTx 21.1 (63 aa).

Residues 1–27 (MQFSGVVLILISMTLVNFVFFETKVEA) form the signal peptide. Disulfide bonds link C33/C53, C38/C58, and C42/C60.

Belongs to the short scorpion toxin superfamily. Potassium channel inhibitor family. Alpha-KTx 21 subfamily. Expressed by the venom gland.

Its subcellular location is the secreted. Functionally, reversibly and voltage-independently blocks voltage-gated potassium channels rKv1.2/KCNA2 (73%) (IC(50)=196 nM), hKv1.3/KCNA3 (50%) (IC(50)=508 nM), Shaker IR (30%), rKv1.6/KCNA6 (22%) (at 0.5 uM). Interaction of Ts15 with Kv1.3/KCNA3 is stronger than its interaction with Kv1.2/KCNA2. The protein is Potassium channel toxin alpha-KTx 21.1 of Tityus serrulatus (Brazilian scorpion).